A 365-amino-acid polypeptide reads, in one-letter code: tRNA 2-selenouridine synthase (365 aa).

The Rhodanese domain maps to phenylalanine 12 to glutamine 136. Cysteine 95 serves as the catalytic S-selanylcysteine intermediate.

Belongs to the SelU family. As to quaternary structure, monomer.

The enzyme catalyses 5-methylaminomethyl-2-thiouridine(34) in tRNA + selenophosphate + (2E)-geranyl diphosphate + H2O + H(+) = 5-methylaminomethyl-2-selenouridine(34) in tRNA + (2E)-thiogeraniol + phosphate + diphosphate. It catalyses the reaction 5-methylaminomethyl-2-thiouridine(34) in tRNA + (2E)-geranyl diphosphate = 5-methylaminomethyl-S-(2E)-geranyl-thiouridine(34) in tRNA + diphosphate. The catalysed reaction is 5-methylaminomethyl-S-(2E)-geranyl-thiouridine(34) in tRNA + selenophosphate + H(+) = 5-methylaminomethyl-2-(Se-phospho)selenouridine(34) in tRNA + (2E)-thiogeraniol. It carries out the reaction 5-methylaminomethyl-2-(Se-phospho)selenouridine(34) in tRNA + H2O = 5-methylaminomethyl-2-selenouridine(34) in tRNA + phosphate. Its function is as follows. Involved in the post-transcriptional modification of the uridine at the wobble position (U34) of tRNA(Lys), tRNA(Glu) and tRNA(Gln). Catalyzes the conversion of 2-thiouridine (S2U-RNA) to 2-selenouridine (Se2U-RNA). Acts in a two-step process involving geranylation of 2-thiouridine (S2U) to S-geranyl-2-thiouridine (geS2U) and subsequent selenation of the latter derivative to 2-selenouridine (Se2U) in the tRNA chain. The sequence is that of tRNA 2-selenouridine synthase from Pseudomonas putida (strain W619).